A 348-amino-acid chain; its full sequence is NADH-quinone oxidoreductase subunit H (348 aa).

The next 8 membrane-spanning stretches (helical) occupy residues 10-30 (LPFLIIVGKTLLLLVVLLVLV), 82-102 (GVFLLAPFVSATLALSTWAVI), 115-135 (VGLLYILAISSLEVYGVIMGG), 161-181 (IGFVLVTVILISGSLDLTTIV), 199-219 (FLDWNWLVLFPMFIIFFISAL), 251-271 (LFFLGEYVAIVLMCALTTILF), 287-307 (IPGVIWFVLKVCFVFFWFAIV), and 322-342 (LGWKVFLPLSLAMVVITAAFL).

Belongs to the complex I subunit 1 family. NDH-1 is composed of 14 different subunits. Subunits NuoA, H, J, K, L, M, N constitute the membrane sector of the complex.

The protein localises to the cell inner membrane. It carries out the reaction a quinone + NADH + 5 H(+)(in) = a quinol + NAD(+) + 4 H(+)(out). Its function is as follows. NDH-1 shuttles electrons from NADH, via FMN and iron-sulfur (Fe-S) centers, to quinones in the respiratory chain. The immediate electron acceptor for the enzyme in this species is believed to be ubiquinone. Couples the redox reaction to proton translocation (for every two electrons transferred, four hydrogen ions are translocated across the cytoplasmic membrane), and thus conserves the redox energy in a proton gradient. This subunit may bind ubiquinone. In Bartonella tribocorum (strain CIP 105476 / IBS 506), this protein is NADH-quinone oxidoreductase subunit H.